A 472-amino-acid chain; its full sequence is Eukaryotic translation initiation factor 2 subunit 3B (472 aa).

A2 bears the N-acetylalanine mark. At S16 the chain carries Phosphoserine. In terms of domain architecture, tr-type G spans 39–248 (QATINIGTIG…IVKKIPVPPR (210 aa)). Positions 48 to 55 (GHVAHGKS) are G1. 51 to 56 (AHGKST) contacts GTP. The G2 stretch occupies residues 76–80 (NITIK). Residues 134–137 (DCPG) form a G3 region. Residues 190-193 (NKID) and 225-227 (SAQ) contribute to the GTP site. Residues 190 to 193 (NKID) are G4. The interval 225–227 (SAQ) is G5.

This sequence belongs to the TRAFAC class translation factor GTPase superfamily. Classic translation factor GTPase family. EIF2G subfamily. In terms of assembly, eIF2 is a heterotrimer composed of an alpha, a beta and a gamma chain. eIF2 is member of the 43S pre-initiation complex (43S PIC). Specifically expressed in testis at the mRNA level.

The catalysed reaction is GTP + H2O = GDP + phosphate + H(+). Functionally, member of the eIF2 complex that functions in the early steps of protein synthesis by forming a ternary complex with GTP and initiator tRNA. This complex binds to a 40S ribosomal subunit, followed by mRNA binding to form the 43S pre-initiation complex (43S PIC). Junction of the 60S ribosomal subunit to form the 80S initiation complex is preceded by hydrolysis of the GTP bound to eIF2 and release of an eIF2-GDP binary complex. In order for eIF2 to recycle and catalyze another round of initiation, the GDP bound to eIF2 must exchange with GTP by way of a reaction catalyzed by eIF-2B. The sequence is that of Eukaryotic translation initiation factor 2 subunit 3B from Homo sapiens (Human).